The sequence spans 141 residues: Large ribosomal subunit protein bL21 (141 aa).

Residues alanine 111 to glutamate 141 are disordered. A compositionally biased stretch (low complexity) spans glutamate 118–alanine 133.

It belongs to the bacterial ribosomal protein bL21 family. In terms of assembly, part of the 50S ribosomal subunit. Contacts protein L20.

Its function is as follows. This protein binds to 23S rRNA in the presence of protein L20. The polypeptide is Large ribosomal subunit protein bL21 (Synechococcus sp. (strain JA-2-3B'a(2-13)) (Cyanobacteria bacterium Yellowstone B-Prime)).